Reading from the N-terminus, the 239-residue chain is Endolytic peptidoglycan transglycosylase RlpA (239 aa).

An N-terminal signal peptide occupies residues 1–25 (MTLTRKTLFLLTAAFGTHSLQTASA). Residues 160–239 (VAENKDIFID…GMVRAVLTAG (80 aa)) form the SPOR domain.

It belongs to the RlpA family.

In terms of biological role, lytic transglycosylase with a strong preference for naked glycan strands that lack stem peptides. The polypeptide is Endolytic peptidoglycan transglycosylase RlpA (Neisseria meningitidis serogroup B (strain ATCC BAA-335 / MC58)).